A 276-amino-acid polypeptide reads, in one-letter code: uncharacterized protein (276 aa).

The protein to E.coli YjfZ.

This is an uncharacterized protein from Escherichia coli (strain K12).